A 179-amino-acid chain; its full sequence is ATP synthase subunit b, chloroplastic (179 aa).

Residues 28–46 form a helical membrane-spanning segment; that stretch reads IINIAALVGILIYAGRDFL.

The protein belongs to the ATPase B chain family. As to quaternary structure, F-type ATPases have 2 components, F(1) - the catalytic core - and F(0) - the membrane proton channel. F(1) has five subunits: alpha(3), beta(3), gamma(1), delta(1), epsilon(1). F(0) has four main subunits: a(1), b(1), b'(1) and c(10-14). The alpha and beta chains form an alternating ring which encloses part of the gamma chain. F(1) is attached to F(0) by a central stalk formed by the gamma and epsilon chains, while a peripheral stalk is formed by the delta, b and b' chains.

It is found in the plastid. The protein localises to the chloroplast thylakoid membrane. In terms of biological role, f(1)F(0) ATP synthase produces ATP from ADP in the presence of a proton or sodium gradient. F-type ATPases consist of two structural domains, F(1) containing the extramembraneous catalytic core and F(0) containing the membrane proton channel, linked together by a central stalk and a peripheral stalk. During catalysis, ATP synthesis in the catalytic domain of F(1) is coupled via a rotary mechanism of the central stalk subunits to proton translocation. Component of the F(0) channel, it forms part of the peripheral stalk, linking F(1) to F(0). This is ATP synthase subunit b, chloroplastic from Trieres chinensis (Marine centric diatom).